Here is a 292-residue protein sequence, read N- to C-terminus: 33 kDa chaperonin (292 aa).

Cystine bridges form between Cys-230–Cys-232 and Cys-263–Cys-266.

This sequence belongs to the HSP33 family. Under oxidizing conditions two disulfide bonds are formed involving the reactive cysteines. Under reducing conditions zinc is bound to the reactive cysteines and the protein is inactive.

It is found in the cytoplasm. Its function is as follows. Redox regulated molecular chaperone. Protects both thermally unfolding and oxidatively damaged proteins from irreversible aggregation. Plays an important role in the bacterial defense system toward oxidative stress. In Shigella boydii serotype 4 (strain Sb227), this protein is 33 kDa chaperonin.